The chain runs to 366 residues: MAGNTFGQIFTVTTFGESHGAGLGCIIDGCPPGLELSEADIQFDLDRRKPGTSRHVTQRREADQVEILSGVFEGKTTGTPIALLIRNTNQRSKDYGNIATAFRPGHADYTYWHKYGTRDYRGGGRSSARETAARVAAGAVAKKWLKEKFGTEITAYVTQVGEKKIRFEGSEHISQNPFFAANQSQIAELEHYMDGVRKSLDSVGAKLHIEAANVPVGLGEPVFDRLDAEIAYAMMGINAVKGVEIGAGFDSVTQRGSEHGDELTPQGFLSNHSGGILGGISTGQDICVNIAIKPTSSIATPRRSIDIHGNPVELATRGRHDPCVGLRAAPIAEAMLALVLIDHALRHRAQNADVAADTPDISRSDK.

The NADP(+) site is built by arginine 48 and arginine 54. FMN contacts are provided by residues 125–127, 238–239, glycine 278, 293–297, and arginine 319; these read RSS, NA, and KPTSS.

It belongs to the chorismate synthase family. Homotetramer. The cofactor is FMNH2.

The enzyme catalyses 5-O-(1-carboxyvinyl)-3-phosphoshikimate = chorismate + phosphate. It functions in the pathway metabolic intermediate biosynthesis; chorismate biosynthesis; chorismate from D-erythrose 4-phosphate and phosphoenolpyruvate: step 7/7. In terms of biological role, catalyzes the anti-1,4-elimination of the C-3 phosphate and the C-6 proR hydrogen from 5-enolpyruvylshikimate-3-phosphate (EPSP) to yield chorismate, which is the branch point compound that serves as the starting substrate for the three terminal pathways of aromatic amino acid biosynthesis. This reaction introduces a second double bond into the aromatic ring system. The protein is Chorismate synthase of Neisseria gonorrhoeae (strain NCCP11945).